A 33-amino-acid chain; its full sequence is Ice-structuring protein GS-5 (33 aa).

The residue at position 1 (methionine 1) is a Blocked amino end (Met).

It belongs to the type-I AFP family.

Functionally, antifreeze proteins lower the blood freezing point. The chain is Ice-structuring protein GS-5 from Myoxocephalus aenaeus (Grubby sculpin).